A 288-amino-acid polypeptide reads, in one-letter code: Acetyl-coenzyme A carboxylase carboxyl transferase subunit beta (288 aa).

The CoA carboxyltransferase N-terminal domain occupies 34-288 (LFSKCPACKV…RLLRMHGGVR (255 aa)). Positions 38, 41, 56, and 59 each coordinate Zn(2+). The C4-type zinc finger occupies 38 to 59 (CPACKVILYKNDLGLEKTCQHC).

The protein belongs to the AccD/PCCB family. As to quaternary structure, acetyl-CoA carboxylase is a heterohexamer composed of biotin carboxyl carrier protein (AccB), biotin carboxylase (AccC) and two subunits each of ACCase subunit alpha (AccA) and ACCase subunit beta (AccD). Zn(2+) serves as cofactor.

Its subcellular location is the cytoplasm. It carries out the reaction N(6)-carboxybiotinyl-L-lysyl-[protein] + acetyl-CoA = N(6)-biotinyl-L-lysyl-[protein] + malonyl-CoA. It functions in the pathway lipid metabolism; malonyl-CoA biosynthesis; malonyl-CoA from acetyl-CoA: step 1/1. Component of the acetyl coenzyme A carboxylase (ACC) complex. Biotin carboxylase (BC) catalyzes the carboxylation of biotin on its carrier protein (BCCP) and then the CO(2) group is transferred by the transcarboxylase to acetyl-CoA to form malonyl-CoA. The sequence is that of Acetyl-coenzyme A carboxylase carboxyl transferase subunit beta from Streptococcus suis (strain 98HAH33).